The primary structure comprises 99 residues: NADH-ubiquinone oxidoreductase chain 4L (99 aa).

The next 3 membrane-spanning stretches (helical) occupy residues 2–22 (YYRY…GIVL), 27–47 (LIIM…LFLI), and 59–79 (VFTI…LAIM).

This sequence belongs to the complex I subunit 4L family.

Its subcellular location is the mitochondrion membrane. It catalyses the reaction a ubiquinone + NADH + 5 H(+)(in) = a ubiquinol + NAD(+) + 4 H(+)(out). Its function is as follows. Core subunit of the mitochondrial membrane respiratory chain NADH dehydrogenase (Complex I) that is believed to belong to the minimal assembly required for catalysis. Complex I functions in the transfer of electrons from NADH to the respiratory chain. The immediate electron acceptor for the enzyme is believed to be ubiquinone. The chain is NADH-ubiquinone oxidoreductase chain 4L (ND4L) from Metridium senile (Brown sea anemone).